The primary structure comprises 963 residues: Spliceosome associated factor 3, U4/U6 recycling protein (963 aa).

Low complexity predominate over residues 1-11; it reads MATAAATSASE. Disordered stretches follow at residues 1–36 and 49–86; these read MATA…RTRR and KTMG…YEWE. Residue Ala-2 is modified to N-acetylalanine. A mediates interaction with PRPF3 region spans residues 2 to 351; it reads ATAAATSASE…LVPDLWIRYS (350 aa). Phosphoserine occurs at positions 10 and 16. The segment covering 14-23 has biased composition (basic and acidic residues); the sequence is AESKAGPKAD. The stretch at 21-46 forms a coiled coil; that stretch reads KADGEEDEVKAARTRRKVLSRAVAAA. Over residues 57 to 69 the composition is skewed to acidic residues; the sequence is QQEEGVSESDGDE. The stretch at 82-110 forms a coiled coil; the sequence is EYEWEYDEEEEKNQLEIERLEEQLSINVY. HAT repeat units lie at residues 126–158, 164–195, 201–237, 242–275, 324–356, 359–391, 394–430, and 487–520; these read GELT…DEIS, LDRE…YSVG, GGLE…FESA, ARLE…WSED, GDPA…YLDR, KVKD…AMER, VDHQ…YLRR, and NNMQ…LERA. Residue Ser-215 is modified to Phosphoserine. The required for interaction with USP4 stretch occupies residues 487–520; that stretch reads NNMQKARELWDSIMTRGNAKYANMWLEYYNLERA. A necessary and sufficient for U6 snRNA binding region spans residues 537-953; the sequence is CTSDYPEHVC…AATEAPKMSN (417 aa). The stretch at 559–619 forms a coiled coil; the sequence is LEDWDIAVQK…ALKKKKKIRG (61 aa). Positions 600–670 are required for nuclear localization; that stretch reads QRKRARAEKK…EVAPGPAGKC (71 aa). The Nuclear localization signal motif lies at 601-608; the sequence is RKRARAEK. Over residues 608-619 the composition is skewed to basic and acidic residues; it reads KKALKKKKKIRG. A disordered region spans residues 608–712; the sequence is KKALKKKKKI…SITVFVSNLP (105 aa). Basic residues predominate over residues 620 to 635; that stretch reads PEKRGADEDDEKEWGD. Positions 644–657 are enriched in acidic residues; it reads RRRVENSIPAAGET. Ser-650 carries the phosphoserine modification. The residue at position 657 (Thr-657) is a Phosphothreonine. Positions 695–712 are enriched in basic and acidic residues; the sequence is VLHDSSKDSITVFVSNLP. An RRM 1 domain is found at 704 to 782; that stretch reads ITVFVSNLPY…RPMFVSPCVD (79 aa). Phosphoserine is present on residues Ser-769, Ser-795, and Ser-852. One can recognise an RRM 2 domain in the interval 801–878; it reads HKLFISGLPF…NVIKVAISNP (78 aa). A compositionally biased stretch (basic and acidic residues) spans 900–909; sequence PQTYGARGKG. Arg-906 is subject to Omega-N-methylarginine.

Component of the 7SK snRNP complex at least composed of P-TEFb (composed of CDK9 and CCNT1/cyclin-T1), HEXIM1, HEXIM2, BCDIN3, SART3 proteins and 7SK and U6 snRNAs. Interacts with AGO1 and AGO2. Interacts with PRPF3 and USP4; the interaction with PRPF3 is direct and recruits USP4 to its substrate PRPF3. Interacts with USP15; the interaction is direct.

It is found in the nucleus. Its subcellular location is the nucleoplasm. The protein localises to the cajal body. It localises to the nucleus speckle. The protein resides in the cytoplasm. In terms of biological role, U6 snRNP-binding protein that functions as a recycling factor of the splicing machinery. Promotes the initial reassembly of U4 and U6 snRNPs following their ejection from the spliceosome during its maturation. Also binds U6atac snRNPs and may function as a recycling factor for U4atac/U6atac spliceosomal snRNP, an initial step in the assembly of U12-type spliceosomal complex. The U12-type spliceosomal complex plays a role in the splicing of introns with non-canonical splice sites. May also function as a substrate-targeting factor for deubiquitinases like USP4 and USP15. Recruits USP4 to ubiquitinated PRPF3 within the U4/U5/U6 tri-snRNP complex, promoting PRPF3 deubiquitination and thereby regulating the spliceosome U4/U5/U6 tri-snRNP spliceosomal complex disassembly. May also recruit the deubiquitinase USP15 to histone H2B and mediate histone deubiquitination, thereby regulating gene expression and/or DNA repair. May play a role in hematopoiesis probably through transcription regulation of specific genes including MYC. The sequence is that of Spliceosome associated factor 3, U4/U6 recycling protein from Pongo abelii (Sumatran orangutan).